The primary structure comprises 28 residues: leu operon leader peptide (28 aa).

Functionally, involved in control of the biosynthesis of leucine. This is leu operon leader peptide (leuL) from Salmonella typhimurium (strain LT2 / SGSC1412 / ATCC 700720).